Reading from the N-terminus, the 244-residue chain is Uracil phosphoribosyltransferase (244 aa).

Residues lysine 59, arginine 68, and 102 to 105 (YSKI) contribute to the GTP site. Residue arginine 112 coordinates 5-phospho-alpha-D-ribose 1-diphosphate. Arginine 129 contacts GTP. Arginine 137 serves as a coordination point for 5-phospho-alpha-D-ribose 1-diphosphate. Arginine 158 provides a ligand contact to GTP. Residues aspartate 164 and 164 to 172 (DPMCATAGS) each bind 5-phospho-alpha-D-ribose 1-diphosphate. Residues isoleucine 229 and 234-236 (GDF) contribute to the uracil site. Aspartate 235 provides a ligand contact to 5-phospho-alpha-D-ribose 1-diphosphate.

It belongs to the UPRTase family. Monomer. Forms homodimers in presence of substrates and homotetramers in the presence of GTP. It depends on Mg(2+) as a cofactor.

It carries out the reaction UMP + diphosphate = 5-phospho-alpha-D-ribose 1-diphosphate + uracil. It functions in the pathway pyrimidine metabolism; UMP biosynthesis via salvage pathway; UMP from uracil: step 1/1. With respect to regulation, allosterically activated by GTP. Binding of GTP leads to 5-time activation of the enzyme. Catalyzes the conversion of uracil and 5-phospho-alpha-D-ribose 1-diphosphate (PRPP) to UMP and diphosphate. The sequence is that of Uracil phosphoribosyltransferase (uprt) from Toxoplasma gondii.